We begin with the raw amino-acid sequence, 166 residues long: Large ribosomal subunit protein bL9 (166 aa).

Belongs to the bacterial ribosomal protein bL9 family.

Binds to the 23S rRNA. The polypeptide is Large ribosomal subunit protein bL9 (Brachyspira hyodysenteriae (strain ATCC 49526 / WA1)).